The chain runs to 771 residues: Transducin-like enhancer protein 3-B (771 aa).

The q domain stretch occupies residues 1-141; sequence MYPQGRHPAP…PLTQQQLQAQ (141 aa). Residues 137-148 show a composition bias toward low complexity; sequence QLQAQHLSHAAH. 2 disordered regions span residues 137–174 and 196–360; these read QLQA…GSGS and HHDL…MEAL. The segment at 142-209 is GP domain; the sequence is HLSHAAHGPP…EHRERESSTN (68 aa). Positions 196 to 206 are enriched in basic and acidic residues; it reads HHDLEHRERES. The segment covering 207 to 217 has biased composition (low complexity); it reads STNNSVSPSDS. Residues 210-278 are ccN domain; the sequence is NSVSPSDSLR…TPRVSPSHSP (69 aa). 2 stretches are compositionally biased toward basic and acidic residues: residues 219-257 and 282-293; these read RASE…KSDD and GLDKARALKKDA. A Nuclear localization signal motif is present at residues 235–238; the sequence is KKRR. An SP domain region spans residues 279-451; the sequence is PENGLDKARA…GGKPAYSFHV (173 aa). A compositionally biased stretch (low complexity) spans 294–309; sequence PNSPASVASSGSTPSS. Residues Ser296 and Ser299 each carry the phosphoserine modification. Over residues 310 to 319 the composition is skewed to basic and acidic residues; it reads KAKDHPHNDK. Residues 320–332 are compositionally biased toward polar residues; the sequence is SSTPGLKSNTPTP. WD repeat units lie at residues 483–521, 529–568, 573–612, 615–654, 656–695, 697–736, and 738–771; these read SHGE…SKSP, NRDN…PRIK, SSAP…LVRQ, GHTD…QLQQ, DFTS…KYQL, LHES…SIFQ, and KESS…EVIY.

Belongs to the WD repeat Groucho/TLE family. In terms of tissue distribution, at gastrulation, expression is absent within the axial mesoderm. After gastrulation is complete, expressed in the presomitic mesoderm, but expression in the tailbud doesn't begin until the six to seven somite stage, after which it becomes abundant. Expression is abundant throughout somitogenesis within the posterior half of the somites, but is absent from older somites. Also expressed in a dynamic manner within the neural plate.

The protein localises to the nucleus. In terms of biological role, transcriptional corepressor that binds to a number of transcription factors. Inhibits the transcriptional activation mediated by CTNNB1 and TCF family members in Wnt signaling. The effects of full-length TLE family members may be modulated by association with dominant-negative AES. This is Transducin-like enhancer protein 3-B from Danio rerio (Zebrafish).